The primary structure comprises 1197 residues: ATP-dependent helicase/nuclease subunit A (1197 aa).

Residues 2 to 458 (KNWTTEQQAA…IDLAKNFRSR (457 aa)) enclose the UvrD-like helicase ATP-binding domain. 23-30 (AAAGSGKT) contacts ATP. The 290-residue stretch at 485-774 (RAALYQGASF…RIMSIHKSKG (290 aa)) folds into the UvrD-like helicase C-terminal domain.

It belongs to the helicase family. AddA subfamily. In terms of assembly, heterodimer of AddA and AddB/RexB. The cofactor is Mg(2+).

The enzyme catalyses Couples ATP hydrolysis with the unwinding of duplex DNA by translocating in the 3'-5' direction.. It carries out the reaction ATP + H2O = ADP + phosphate + H(+). The heterodimer acts as both an ATP-dependent DNA helicase and an ATP-dependent, dual-direction single-stranded exonuclease. Recognizes the chi site generating a DNA molecule suitable for the initiation of homologous recombination. The AddA nuclease domain is required for chi fragment generation; this subunit has the helicase and 3' -&gt; 5' nuclease activities. This Alkaliphilus metalliredigens (strain QYMF) protein is ATP-dependent helicase/nuclease subunit A.